Consider the following 192-residue polypeptide: Ion-translocating oxidoreductase complex subunit A (192 aa).

The next 6 membrane-spanning stretches (helical) occupy residues 5-25 (ILLLVGTVLVNNFVLVKFLGL), 39-59 (IGMGLATTFVLTLASVCAYLV), 67-87 (LGIEYLRTMSFILVIAVVVQF), 102-122 (LLGIFLPLITTNCAVLGVALL), 134-154 (IIYGFGAAVGFSLVLILFASM), and 171-191 (SIAMITAGLMSLAFMGFTGLV).

The protein belongs to the NqrDE/RnfAE family. The complex is composed of six subunits: RnfA, RnfB, RnfC, RnfD, RnfE and RnfG.

The protein localises to the cell inner membrane. Its function is as follows. Part of a membrane-bound complex that couples electron transfer with translocation of ions across the membrane. This chain is Ion-translocating oxidoreductase complex subunit A, found in Vibrio campbellii (strain ATCC BAA-1116).